A 462-amino-acid polypeptide reads, in one-letter code: CCA-adding enzyme (462 aa).

Positions 54 and 57 each coordinate ATP. The CTP site is built by Ser54 and Arg57. The Mg(2+) site is built by Asp66, Asp68, and Asp117. His140, Lys160, and Tyr169 together coordinate ATP. CTP contacts are provided by His140, Lys160, and Tyr169.

It belongs to the tRNA nucleotidyltransferase/poly(A) polymerase family. Archaeal CCA-adding enzyme subfamily. In terms of assembly, homodimer. The cofactor is Mg(2+).

The catalysed reaction is a tRNA precursor + 2 CTP + ATP = a tRNA with a 3' CCA end + 3 diphosphate. The enzyme catalyses a tRNA with a 3' CCA end + 2 CTP + ATP = a tRNA with a 3' CCACCA end + 3 diphosphate. Its function is as follows. Catalyzes the addition and repair of the essential 3'-terminal CCA sequence in tRNAs without using a nucleic acid template. Adds these three nucleotides in the order of C, C, and A to the tRNA nucleotide-73, using CTP and ATP as substrates and producing inorganic pyrophosphate. tRNA 3'-terminal CCA addition is required both for tRNA processing and repair. Also involved in tRNA surveillance by mediating tandem CCA addition to generate a CCACCA at the 3' terminus of unstable tRNAs. While stable tRNAs receive only 3'-terminal CCA, unstable tRNAs are marked with CCACCA and rapidly degraded. The polypeptide is CCA-adding enzyme (Halorubrum lacusprofundi (strain ATCC 49239 / DSM 5036 / JCM 8891 / ACAM 34)).